We begin with the raw amino-acid sequence, 84 residues long: Sulfur carrier protein TusA (84 aa).

Cys21 functions as the Cysteine persulfide intermediate in the catalytic mechanism.

Belongs to the sulfur carrier protein TusA family.

Its subcellular location is the cytoplasm. Sulfur carrier protein which probably makes part of a sulfur-relay system. The sequence is that of Sulfur carrier protein TusA from Pseudomonas savastanoi pv. phaseolicola (strain 1448A / Race 6) (Pseudomonas syringae pv. phaseolicola (strain 1448A / Race 6)).